The primary structure comprises 274 residues: uncharacterized protein (274 aa).

Residues 1 to 20 are compositionally biased toward basic and acidic residues; the sequence is MSLEKSLDEIINERTNGFDH. Disordered regions lie at residues 1 to 63, 148 to 217, and 230 to 274; these read MSLE…HDLD, NLKG…EDLD, and ASTV…MEAV. Basic residues predominate over residues 21–44; sequence KHSRRRGSQNRISKKSRLTYKFKR. Over residues 45–63 the composition is skewed to basic and acidic residues; it reads ASKEHNSSPDDGPWQHDLD. One can recognise an RRM domain in the interval 85–161; the sequence is FGVRVENLHY…SEIQISKKSP (77 aa). A compositionally biased stretch (polar residues) spans 148 to 160; sequence NLKGSEIQISKKS. 2 stretches are compositionally biased toward low complexity: residues 181–190 and 200–211; these read SSRSNRGFNR and RSSSKKSSNNSI. Residues 230-245 show a composition bias toward polar residues; sequence ASTVSSHSSQDFTPSI. Positions 263–274 are enriched in acidic residues; the sequence is LTEEMDLQMEAV.

This is an uncharacterized protein from Schizosaccharomyces pombe (strain 972 / ATCC 24843) (Fission yeast).